The chain runs to 399 residues: LEM domain-containing protein Bocksbeutel (399 aa).

One can recognise an LEM domain in the interval 4–48 (LSYLDTLGNKELLAKCLEHGLPGVPVTDSTRSVIIRRLKAKITGV). Disordered stretches follow at residues 49 to 103 (PLNK…EQSR), 119 to 141 (SVQT…SYMV), and 233 to 287 (NSTS…SNLA). Composition is skewed to polar residues over residues 68–77 (HGSQVTTPTS) and 89–99 (GRTSSNNNKIS). A compositionally biased stretch (polar residues) spans 233-256 (NSTSYEESSTYNPKLSPISPRNTF). The chain crosses the membrane as a helical span at residues 377 to 397 (FYLILVVSVMLATMVYVVLTP).

It localises to the nucleus inner membrane. Its subcellular location is the cytoplasm. The protein localises to the nucleus. The protein resides in the nucleoplasm. It is found in the endoplasmic reticulum. Inner nuclear membrane protein. May have a role in maintaining the structural integrity of the nuclear lamina. During pupal development, plays essential and redundant functions with the other LEM domain proteins; MAN1 and Ote. Also has a redundant but important role with Ote in larval development. This chain is LEM domain-containing protein Bocksbeutel, found in Drosophila melanogaster (Fruit fly).